The primary structure comprises 281 residues: Cell growth regulator with EF hand domain protein 1 (281 aa).

The signal sequence occupies residues 1 to 21 (MFQWLMQALMLPLLLLPLGRA). EF-hand domains lie at 71-106 (DREQ…ALAP) and 115-150 (PVIL…PKHT). Residues aspartate 84, aspartate 86, asparagine 88, glutamine 90, glutamate 95, aspartate 128, aspartate 130, aspartate 132, and glutamate 139 each contribute to the Ca(2+) site. Residues 148–281 (KHTESLPPAL…HSIQLENDEI (134 aa)) are disordered. Residues 168–183 (LLANSPLQSETQQSLG) show a composition bias toward polar residues. Basic and acidic residues predominate over residues 184 to 213 (TKEEIRGQVEAKRASLEPEQEAGHQTEGKV). Phosphoserine is present on residues serine 217 and serine 228. The span at 237 to 256 (EGAEEQVEIKDNEGEAKELL) shows a compositional bias: basic and acidic residues.

Probably digested extracellularly by an unknown serine protease generating extremely hydrophobic bioactive peptides.

The protein resides in the secreted. Mediates cell-cell adhesion in a calcium-dependent manner. Able to inhibit growth in several cell lines. The chain is Cell growth regulator with EF hand domain protein 1 from Mus musculus (Mouse).